The primary structure comprises 94 residues: uncharacterized protein (94 aa).

This is an uncharacterized protein from Haemophilus influenzae (strain ATCC 51907 / DSM 11121 / KW20 / Rd).